The sequence spans 130 residues: Small ribosomal subunit protein uS11 (130 aa).

Belongs to the universal ribosomal protein uS11 family. In terms of assembly, part of the 30S ribosomal subunit. Interacts with proteins S7 and S18. Binds to IF-3.

In terms of biological role, located on the platform of the 30S subunit, it bridges several disparate RNA helices of the 16S rRNA. Forms part of the Shine-Dalgarno cleft in the 70S ribosome. This chain is Small ribosomal subunit protein uS11, found in Synechococcus sp. (strain CC9605).